A 2295-amino-acid chain; its full sequence is Protein DOP1B (2295 aa).

2 positions are modified to phosphoserine: Ser-556 and Ser-597. 4 disordered regions span residues 574-599 (AGDE…SSPE), 651-684 (GEEN…DPKP), 1034-1059 (CKEA…QFTT), and 1092-1136 (DLPD…LQDL). Positions 1111 to 1131 (ADTSSGHTDSENTSTFSSPSH) are enriched in polar residues. A Phosphoserine modification is found at Ser-1167.

The protein belongs to the DOP1 family. As to quaternary structure, homooligomer. Heterotrimer with ATP9A and MON2; this interaction is retromer-independent. Interacts with SNX3. In terms of tissue distribution, expressed in liver, heart and brain.

It localises to the early endosome membrane. The protein resides in the golgi apparatus membrane. May play a role in regulating membrane trafficking of cargo proteins. Together with ATP9A and MON2, regulates SNX3 retromer-mediated endosomal sorting of WLS away from lysosomal degradation. This chain is Protein DOP1B (Dop1b), found in Mus musculus (Mouse).